We begin with the raw amino-acid sequence, 493 residues long: Ketol-acid reductoisomerase (NADP(+)) (493 aa).

Positions 14-208 (LDQLGRCRFM…GGHRAGVLES (195 aa)) constitute a KARI N-terminal Rossmann domain. NADP(+) contacts are provided by residues 45–48 (CGAQ), Arg-68, Arg-76, Ser-78, and 108–110 (DKQ). The active site involves His-132. Gly-158 contributes to the NADP(+) binding site. KARI C-terminal knotted domains follow at residues 209–345 (SFVA…APKG) and 346–486 (ENIK…MTDM). Residues Asp-217, Glu-221, Glu-390, and Glu-394 each coordinate Mg(2+). Substrate is bound at residue Ser-415.

This sequence belongs to the ketol-acid reductoisomerase family. Requires Mg(2+) as cofactor.

The enzyme catalyses (2R)-2,3-dihydroxy-3-methylbutanoate + NADP(+) = (2S)-2-acetolactate + NADPH + H(+). It carries out the reaction (2R,3R)-2,3-dihydroxy-3-methylpentanoate + NADP(+) = (S)-2-ethyl-2-hydroxy-3-oxobutanoate + NADPH + H(+). It functions in the pathway amino-acid biosynthesis; L-isoleucine biosynthesis; L-isoleucine from 2-oxobutanoate: step 2/4. The protein operates within amino-acid biosynthesis; L-valine biosynthesis; L-valine from pyruvate: step 2/4. Its function is as follows. Involved in the biosynthesis of branched-chain amino acids (BCAA). Catalyzes an alkyl-migration followed by a ketol-acid reduction of (S)-2-acetolactate (S2AL) to yield (R)-2,3-dihydroxy-isovalerate. In the isomerase reaction, S2AL is rearranged via a Mg-dependent methyl migration to produce 3-hydroxy-3-methyl-2-ketobutyrate (HMKB). In the reductase reaction, this 2-ketoacid undergoes a metal-dependent reduction by NADPH to yield (R)-2,3-dihydroxy-isovalerate. This chain is Ketol-acid reductoisomerase (NADP(+)), found in Histophilus somni (strain 2336) (Haemophilus somnus).